The following is a 149-amino-acid chain: Alpha-crystallin A chain (149 aa).

Residues 41-149 (LFRTVLESGI…DTSYSERPIP (109 aa)) form the sHSP domain. Histidine 89, glutamate 91, and histidine 96 together coordinate Zn(2+).

Belongs to the small heat shock protein (HSP20) family. Heteropolymer composed of three CRYAA and one CRYAB subunits. Inter-subunit bridging via zinc ions enhances stability, which is crucial as there is no protein turn over in the lens. Zinc coordination is achieved at least by His-89, Glu-91 and His-96. His-83 and Glu-85 come from the same molecule within the oligomer, while His-90 residue is provided by another molecule. Can also form homodimers and homotetramers (dimers of dimers) which serve as the building blocks of homooligomers.

The protein localises to the cytoplasm. It is found in the nucleus. Contributes to the transparency and refractive index of the lens. May act as a chaperone, preventing aggregation of various proteins under a wide range of stress conditions. This chain is Alpha-crystallin A chain (CRYAA), found in Trachemys scripta elegans (Red-eared slider turtle).